We begin with the raw amino-acid sequence, 282 residues long: HTH-type transcriptional activator RhaR (282 aa).

The region spanning 179–277 (DKLITRLAAS…GMTPSQWRHL (99 aa)) is the HTH araC/xylS-type domain. 2 DNA-binding regions (H-T-H motif) span residues 196–217 (DKFCDEASCSERVLRQQFRQQT) and 244–267 (ISDISTECGFEDSNYFSVVFTRET).

In terms of assembly, binds DNA as a dimer.

The protein localises to the cytoplasm. Activates expression of the rhaSR operon in response to L-rhamnose. The sequence is that of HTH-type transcriptional activator RhaR from Escherichia coli O139:H28 (strain E24377A / ETEC).